The primary structure comprises 297 residues: uncharacterized protein (297 aa).

Residues 267–297 form a disordered region; the sequence is NTQHAGKPGAQHRTRRSPPAFRRADRLRQSA. A compositionally biased stretch (basic and acidic residues) spans 288–297; that stretch reads RRADRLRQSA.

This is an uncharacterized protein from Treponema pallidum (strain Nichols).